The chain runs to 714 residues: Calpain-1 catalytic subunit (714 aa).

One can recognise a Calpain catalytic domain in the interval 55–354; that stretch reads LFRDEAFPPV…FTRLEICNLT (300 aa). Gln-109 and Asp-114 together coordinate Ca(2+). Residues Cys-115, His-272, and Asn-296 contribute to the active site. The Ca(2+) site is built by Ser-316, Asp-318, and Glu-323. Thr-354 carries the phosphothreonine modification. Positions 355–526 are domain III; sequence PDALKSRTIR…KSAGTAELDD (172 aa). Positions 527–542 are linker; that stretch reads QIQANLPDEQVLSEEE. EF-hand domains lie at 541–576, 585–618, 615–650, and 680–714; these read EEIDENFKALFRQLAGEDMEISVKELRTILNRIISK, FSLESCRSMVNLMDRDGNGKLGLVEFNILWNRIR, NRIRNYLSIFRKFDLDKSGSMSAYEMRMAIESAGFK, and VRLETMFRFFKTLDTDLDGVVTFDLFKWLQLTMFA. The segment at 543–713 is domain IV; that stretch reads IDENFKALFR…LFKWLQLTMF (171 aa). Ca(2+) contacts are provided by Asp-598, Asp-600, Asn-602, Lys-604, Glu-609, Asp-628, Asp-630, Ser-632, Ser-634, and Glu-639.

This sequence belongs to the peptidase C2 family. In terms of assembly, forms a heterodimer with a small (regulatory) subunit (CAPNS1). Ca(2+) is required as a cofactor. Undergoes calcium-induced successive autoproteolytic cleavages that generate a membrane-bound 78 kDa active form and an intracellular 75 kDa active form. Calpastatin reduces with high efficiency the transition from 78 kDa to 75 kDa calpain forms. Ubiquitous.

The protein localises to the cytoplasm. Its subcellular location is the cell membrane. It catalyses the reaction Broad endopeptidase specificity.. Its activity is regulated as follows. Activated by micromolar concentrations of calcium and inhibited by calpastatin. Calcium-regulated non-lysosomal thiol-protease which catalyze limited proteolysis of substrates involved in cytoskeletal remodeling and signal transduction. Proteolytically cleaves CTBP1. Cleaves and activates caspase-7 (CASP7). The sequence is that of Calpain-1 catalytic subunit (CAPN1) from Macaca fascicularis (Crab-eating macaque).